A 333-amino-acid chain; its full sequence is Sphingomyelinase C (333 aa).

A signal peptide spans 1–26 (MKGKLLKGVLSLGVGLGALYSGTSAQ). A disulfide bond links Cys150 and Cys186.

This sequence belongs to the neutral sphingomyelinase family. Requires Mg(2+) as cofactor. In terms of processing, the N-terminus is blocked.

It localises to the secreted. The enzyme catalyses a sphingomyelin + H2O = phosphocholine + an N-acylsphing-4-enine + H(+). With respect to regulation, activated by cobalt and manganese ions. Required, with sphingomyelinase, to effect target cell lysis (hemolysis). The sequence is that of Sphingomyelinase C (cerB) from Bacillus cereus.